Reading from the N-terminus, the 621-residue chain is Glutathione-regulated potassium-efflux system protein KefC (621 aa).

Helical transmembrane passes span 4 to 24 (HTLI…PVAV), 26 to 46 (LGLG…PWGF), 54 to 74 (SILH…GLEL), 90 to 110 (GALQ…LLGM), 114 to 134 (VAEL…MQAM), 151 to 171 (VLLF…LLAV), 178 to 198 (LGAF…VILL), 218 to 238 (VFSA…EEAG), 270 to 290 (GLLL…GTLV), 294 to 314 (LRIL…LWLI), 327 to 347 (WFAV…GAAQ), and 359 to 379 (ALTL…VLLT). The 120-residue stretch at 399–518 (QPRVIIAGFG…AGVETPERET (120 aa)) folds into the RCK N-terminal domain. The segment at 591 to 621 (LSLTQRHGWQGTEEGKHTGDPRDEPESKPTV) is disordered. The span at 603-621 (EEGKHTGDPRDEPESKPTV) shows a compositional bias: basic and acidic residues.

Belongs to the monovalent cation:proton antiporter 2 (CPA2) transporter (TC 2.A.37) family. KefC subfamily. In terms of assembly, homodimer. Interacts with the regulatory subunit KefF.

Its subcellular location is the cell inner membrane. In terms of biological role, pore-forming subunit of a potassium efflux system that confers protection against electrophiles. Catalyzes K(+)/H(+) antiport. This chain is Glutathione-regulated potassium-efflux system protein KefC, found in Enterobacter sp. (strain 638).